The following is a 163-amino-acid chain: Phosphopantetheine adenylyltransferase (163 aa).

Substrate is bound at residue T10. Residues 10 to 11 (TF) and H18 each bind ATP. Substrate is bound by residues K42, L74, and R88. ATP contacts are provided by residues 89–91 (GLR), E99, and 124–130 (NSFISST).

It belongs to the bacterial CoaD family. As to quaternary structure, homohexamer. Mg(2+) is required as a cofactor.

It is found in the cytoplasm. The enzyme catalyses (R)-4'-phosphopantetheine + ATP + H(+) = 3'-dephospho-CoA + diphosphate. The protein operates within cofactor biosynthesis; coenzyme A biosynthesis; CoA from (R)-pantothenate: step 4/5. Its function is as follows. Reversibly transfers an adenylyl group from ATP to 4'-phosphopantetheine, yielding dephospho-CoA (dPCoA) and pyrophosphate. This Shewanella baltica (strain OS155 / ATCC BAA-1091) protein is Phosphopantetheine adenylyltransferase.